The primary structure comprises 371 residues: Glutamate 5-kinase (371 aa).

Lys-10 is a binding site for ATP. 3 residues coordinate substrate: Ser-50, Asp-137, and Asn-149. Residues Ser-169–Asp-170 and Thr-208–Lys-214 each bind ATP. One can recognise a PUA domain in the interval Glu-274–Asp-352.

It belongs to the glutamate 5-kinase family.

The protein resides in the cytoplasm. It catalyses the reaction L-glutamate + ATP = L-glutamyl 5-phosphate + ADP. It functions in the pathway amino-acid biosynthesis; L-proline biosynthesis; L-glutamate 5-semialdehyde from L-glutamate: step 1/2. Its function is as follows. Catalyzes the transfer of a phosphate group to glutamate to form L-glutamate 5-phosphate. The protein is Glutamate 5-kinase of Dictyoglomus turgidum (strain DSM 6724 / Z-1310).